The primary structure comprises 322 residues: MPNITWCDLPEDVSLWPGLPLSLSGDEVMPLDYHAGRSGWLLYGRGLDKQRLTQYQSKLGAAMVIVAAWCVEDYQVIRLAGSLTARATRLAHEAQLDVAPLGKIPHLRTPGLLVMDMDSTAIQIECIDEIAKLAGTGEMVAEVTERAMRGELDFTASLRSRVATLKGADANILQQVRENLPLMPGLTQLVLKLETLGWKVAIASGGFTFFAEYLRDKLRLTAVVANELEIMDGKFTGNVIGDIVDAQYKAKTLTRLAQEYEIPLAQTVAIGDGANDLPMIKAAGLGIAYHAKPKVNEKAEVTIRHADLMGVFCILSGSLNQK.

Residue 10 to 12 (PED) participates in substrate binding. Residues Asp-12, Asp-116, and Asp-118 each contribute to the Mg(2+) site. Asp-116 (nucleophile) is an active-site residue. Asp-118 acts as the Proton donor in catalysis. Substrate contacts are provided by residues Glu-125, Arg-161, 204 to 205 (SG), and Lys-249. Asp-272 lines the Mg(2+) pocket. A substrate-binding site is contributed by Asn-275.

This sequence belongs to the HAD-like hydrolase superfamily. SerB family. It depends on Mg(2+) as a cofactor.

The catalysed reaction is O-phospho-L-serine + H2O = L-serine + phosphate. The enzyme catalyses O-phospho-D-serine + H2O = D-serine + phosphate. The protein operates within amino-acid biosynthesis; L-serine biosynthesis; L-serine from 3-phospho-D-glycerate: step 3/3. Functionally, catalyzes the dephosphorylation of phosphoserine (P-Ser). The protein is Phosphoserine phosphatase (serB) of Escherichia coli O157:H7.